The chain runs to 283 residues: Pantothenate synthetase (283 aa).

Methionine 30–histidine 37 provides a ligand contact to ATP. Histidine 37 acts as the Proton donor in catalysis. Glutamine 61 contributes to the (R)-pantoate binding site. Glutamine 61 provides a ligand contact to beta-alanine. Glycine 149–aspartate 152 serves as a coordination point for ATP. (R)-pantoate is bound at residue glutamine 155. Leucine 186–arginine 189 contributes to the ATP binding site.

Belongs to the pantothenate synthetase family. As to quaternary structure, homodimer.

Its subcellular location is the cytoplasm. The enzyme catalyses (R)-pantoate + beta-alanine + ATP = (R)-pantothenate + AMP + diphosphate + H(+). The protein operates within cofactor biosynthesis; (R)-pantothenate biosynthesis; (R)-pantothenate from (R)-pantoate and beta-alanine: step 1/1. Its function is as follows. Catalyzes the condensation of pantoate with beta-alanine in an ATP-dependent reaction via a pantoyl-adenylate intermediate. The polypeptide is Pantothenate synthetase (Escherichia coli (strain SMS-3-5 / SECEC)).